Consider the following 141-residue polypeptide: Putative antiporter subunit mnhB2 (141 aa).

A run of 4 helical transmembrane segments spans residues 10–30 (TVTKLVVFILLTFGFYVFFAG), 35–55 (GGGFIGGLIFSSAFILMFLAF), 70–90 (ILMIIGALVSSITAIMPTFFG), and 114–134 (ITLFELGILFSVVGVIVTVML).

This sequence belongs to the CPA3 antiporters (TC 2.A.63) subunit B family. In terms of assembly, may form a heterooligomeric complex that consists of seven subunits: mnhA2, mnhB2, mnhC2, mnhD2, mnhE2, mnhF2 and mnhG2.

Its subcellular location is the cell membrane. The sequence is that of Putative antiporter subunit mnhB2 (mnhB2) from Staphylococcus aureus (strain MRSA252).